The primary structure comprises 807 residues: Leucine-rich repeat-containing protein 41 (807 aa).

Residues 45-54 are interaction with Elongin BC complex; the sequence is ALFELCGRAV. Residues Ser155, Ser276, and Ser326 each carry the phosphoserine modification. Disordered stretches follow at residues 269-290, 304-335, and 349-403; these read ASRG…RRPR, TRRK…AIGG, and ASGT…GSGA. Thr327 carries the phosphothreonine modification. Positions 352–381 are enriched in low complexity; that stretch reads TKQPSAPAAASASSSTSSKRAPASSASQPK. At Ser368 the chain carries Phosphoserine. Over residues 382–396 the composition is skewed to basic residues; it reads PLKRFKRAAGKKGPR. LRR repeat units follow at residues 482 to 502, 513 to 525, 526 to 550, 608 to 632, 638 to 661, 696 to 723, and 726 to 747; these read WVSL…IFRL, AGCR…LSDL, FSPL…VLSI, SGSL…LVLQ, NLSL…VLFL, NSTL…VFSE, and SSSL…LLEF.

In terms of assembly, part of an E3 ubiquitin-protein ligase complex with Elongin BC (ELOB and ELOC), RBX1 and CUL5. Component of a probable ECS(LRRC41) complex which contains CUL5, RNF7/RBX2, Elongin BC and LRRC41. Interacts with CUL5, RNF7, ELOB and ELOC.

The protein operates within protein modification; protein ubiquitination. Probable substrate recognition component of an ECS (Elongin BC-CUL2/5-SOCS-box protein) E3 ubiquitin ligase complex which mediates the ubiquitination and subsequent proteasomal degradation of target proteins. The sequence is that of Leucine-rich repeat-containing protein 41 (Lrrc41) from Mus musculus (Mouse).